Consider the following 393-residue polypeptide: tRNA(Met) cytidine acetate ligase (393 aa).

The ATP site is built by Gly81, Asn142, and Arg167.

The protein belongs to the TmcAL family.

The protein localises to the cytoplasm. It catalyses the reaction cytidine(34) in elongator tRNA(Met) + acetate + ATP = N(4)-acetylcytidine(34) in elongator tRNA(Met) + AMP + diphosphate. Catalyzes the formation of N(4)-acetylcytidine (ac(4)C) at the wobble position of elongator tRNA(Met), using acetate and ATP as substrates. First activates an acetate ion to form acetyladenylate (Ac-AMP) and then transfers the acetyl group to tRNA to form ac(4)C34. The chain is tRNA(Met) cytidine acetate ligase from Bacillus anthracis (strain A0248).